The chain runs to 156 residues: Small ribosomal subunit protein uS7 (156 aa).

This sequence belongs to the universal ribosomal protein uS7 family. Part of the 30S ribosomal subunit. Contacts proteins S9 and S11.

In terms of biological role, one of the primary rRNA binding proteins, it binds directly to 16S rRNA where it nucleates assembly of the head domain of the 30S subunit. Is located at the subunit interface close to the decoding center, probably blocks exit of the E-site tRNA. The polypeptide is Small ribosomal subunit protein uS7 (Magnetococcus marinus (strain ATCC BAA-1437 / JCM 17883 / MC-1)).